Here is a 354-residue protein sequence, read N- to C-terminus: Ferredoxin--NADP reductase (354 aa).

D39, Q47, Y52, V92, F127, D296, and T337 together coordinate FAD.

The protein belongs to the ferredoxin--NADP reductase type 2 family. As to quaternary structure, homodimer. It depends on FAD as a cofactor.

It carries out the reaction 2 reduced [2Fe-2S]-[ferredoxin] + NADP(+) + H(+) = 2 oxidized [2Fe-2S]-[ferredoxin] + NADPH. This chain is Ferredoxin--NADP reductase, found in Albidiferax ferrireducens (strain ATCC BAA-621 / DSM 15236 / T118) (Rhodoferax ferrireducens).